The sequence spans 329 residues: Ribonucleoside-diphosphate reductase small chain (329 aa).

The Fe cation site is built by Asp75, Glu106, and His109. Residue Tyr113 is part of the active site. Fe cation contacts are provided by Glu168, Glu202, and His205.

Belongs to the ribonucleoside diphosphate reductase small chain family. Heterodimer of a large and a small chain. Fe cation serves as cofactor.

It is found in the cytoplasm. The catalysed reaction is a 2'-deoxyribonucleoside 5'-diphosphate + [thioredoxin]-disulfide + H2O = a ribonucleoside 5'-diphosphate + [thioredoxin]-dithiol. In terms of biological role, provides the precursors necessary for DNA synthesis. Catalyzes the biosynthesis of deoxyribonucleotides from the corresponding ribonucleotides. This is Ribonucleoside-diphosphate reductase small chain from Nicotiana tabacum (Common tobacco).